The chain runs to 52 residues: MRSAILLVIVAIVAILGFLGVNAEPLPSPLAEPNPHAKAAPLSPAAMASLAG.

An N-terminal signal peptide occupies residues 1 to 23 (MRSAILLVIVAIVAILGFLGVNA). AXPX repeat units follow at residues 23 to 26 (AEPL), 31 to 34 (AEPN), and 39 to 42 (AAPL). A propeptide spanning residues 24-41 (EPLPSPLAEPNPHAKAAP) is cleaved from the precursor. The disordered stretch occupies residues 30–52 (LAEPNPHAKAAPLSPAAMASLAG). Over residues 37–52 (AKAAPLSPAAMASLAG) the composition is skewed to low complexity. A51 is subject to Alanine amide.

As to expression, expressed by the venom gland.

The protein resides in the secreted. This is Venom peptide 4b from Eumenes pomiformis (Potter wasp).